The primary structure comprises 145 residues: Plastocyanin, chloroplastic (145 aa).

A chloroplast-targeting transit peptide spans 1 to 48 (MASLMRKAAVAPAKATRTTVKASASLQRVAQAAGVAVAGFSLALSANA). Residues 49 to 145 (ANVKLGADSG…AGMVGKVIVQ (97 aa)) form the Plastocyanin-like domain. Histidine 85, cysteine 130, histidine 133, and methionine 138 together coordinate Cu cation.

Belongs to the plastocyanin family. It depends on Cu(2+) as a cofactor.

The protein localises to the plastid. Its subcellular location is the chloroplast thylakoid membrane. In terms of biological role, participates in electron transfer between P700 and the cytochrome b6-f complex in photosystem I. The sequence is that of Plastocyanin, chloroplastic (PETE) from Tetradesmus obliquus (Green alga).